The chain runs to 418 residues: Protein MAEA homolog (418 aa).

Residues 141–173 (NNTKLKRILVDYMLRMSYFETATKLSESSNIMD) enclose the LisH domain. The 58-residue stretch at 179–236 (IFREAKKVIDALKNREVASALTWCADNKTRLKKSKSKFEFQLRLQEFIELVRVDTAES) folds into the CTLH domain. Residues 330-403 (CTKEDPLSQE…NGGKITCPRT (74 aa)) form an RING-Gid-type zinc finger.

As to quaternary structure, interacts with RANBPM.

It is found in the cytoplasm. This Arabidopsis thaliana (Mouse-ear cress) protein is Protein MAEA homolog.